A 406-amino-acid polypeptide reads, in one-letter code: Protein translocase subunit SecD (406 aa).

Transmembrane regions (helical) follow at residues 8–28 (IVIL…NPIN), 240–260 (MAAM…YRVA), 262–282 (FVAD…MCAI), 289–309 (PGIA…VIIF), 334–354 (FPAI…LFFF), and 361–381 (GFAV…IFIT).

The protein belongs to the SecD/SecF family. SecD subfamily. Forms a complex with SecF. Part of the essential Sec protein translocation apparatus which comprises SecA, SecYEG and auxiliary proteins SecDF. Other proteins may also be involved.

It is found in the cell inner membrane. In terms of biological role, part of the Sec protein translocase complex. Interacts with the SecYEG preprotein conducting channel. SecDF uses the proton motive force (PMF) to complete protein translocation after the ATP-dependent function of SecA. The protein is Protein translocase subunit SecD of Sebaldella termitidis (strain ATCC 33386 / NCTC 11300).